An 827-amino-acid chain; its full sequence is Transcription factor SOX-6 (827 aa).

Residues 1–10 (MSSKQATSPF) are compositionally biased toward polar residues. The disordered stretch occupies residues 1 to 51 (MSSKQATSPFACTVDGEETMTQDLTSREKEEGSDQHPASHLPLHPIMHNKP). Residues 25 to 34 (TSREKEEGSD) show a composition bias toward basic and acidic residues. Residue Thr119 is modified to Phosphothreonine. Residues 184 to 257 (LAEKERQLST…QHKINLLQQQ (74 aa)) are a coiled coil. Disordered regions lie at residues 329 to 360 (HVSH…GGHS) and 380 to 470 (SPGA…PIGG). Positions 341-357 (GISDRLGRNLDPYEHGG) are enriched in basic and acidic residues. Ser399 bears the Phosphoserine mark. A Phosphothreonine modification is found at Thr401. Residues Lys404 and Lys417 each participate in a glycyl lysine isopeptide (Lys-Gly) (interchain with G-Cter in SUMO) cross-link. Composition is skewed to polar residues over residues 421–431 (TAQPLNLSSRP) and 439–461 (SPTS…LPNK). Residues Ser439 and Ser442 each carry the phosphoserine modification. A DNA-binding region (HMG box) is located at residues 620 to 688 (IKRPMNAFMV…IHLEKYPNYK (69 aa)). 2 disordered regions span residues 752–772 (TPSP…EPSL) and 786–827 (ASLA…VSAN). Over residues 795-808 (NGEDEMEAYDDYED) the composition is skewed to acidic residues.

In terms of assembly, homodimer. Interacts with DAZAP2. May interact with CENPK. Sumoylation inhibits the transcriptional activity.

It is found in the nucleus. Its subcellular location is the cytoplasm. Transcription factor that plays a key role in several developmental processes, including neurogenesis, chondrocytes differentiation and cartilage formation. Specifically binds the 5'-AACAAT-3' DNA motif present in enhancers and super-enhancers and promotes expression of genes important for chondrogenesis. Required for overt chondrogenesis when condensed prechondrocytes differentiate into early stage chondrocytes: SOX5 and SOX6 cooperatively bind with SOX9 on active enhancers and super-enhancers associated with cartilage-specific genes, and thereby potentiate SOX9's ability to transactivate. Not involved in precartilaginous condensation, the first step in chondrogenesis, during which skeletal progenitors differentiate into prechondrocytes. Together with SOX5, required to form and maintain a pool of highly proliferating chondroblasts between epiphyses and metaphyses, to form columnar chondroblasts, delay chondrocyte prehypertrophy but promote hypertrophy, and to delay terminal differentiation of chondrocytes on contact with ossification fronts. Binds to the proximal promoter region of the myelin protein MPZ gene, and is thereby involved in the differentiation of oligodendroglia in the developing spinal tube. Binds to the gene promoter of MBP and acts as a transcriptional repressor. The chain is Transcription factor SOX-6 from Rattus norvegicus (Rat).